The primary structure comprises 344 residues: Probable dual-specificity RNA methyltransferase RlmN (344 aa).

Glu-89 acts as the Proton acceptor in catalysis. A Radical SAM core domain is found at 95-329 (TDQRLTVCVS…VSLRASRGLD (235 aa)). Cys-102 and Cys-334 are joined by a disulfide. Positions 109, 113, and 116 each coordinate [4Fe-4S] cluster. Residues 156-157 (GE), Ser-186, 215-217 (SLH), and Asn-291 contribute to the S-adenosyl-L-methionine site. Cys-334 acts as the S-methylcysteine intermediate in catalysis.

It belongs to the radical SAM superfamily. RlmN family. [4Fe-4S] cluster serves as cofactor.

Its subcellular location is the cytoplasm. It carries out the reaction adenosine(2503) in 23S rRNA + 2 reduced [2Fe-2S]-[ferredoxin] + 2 S-adenosyl-L-methionine = 2-methyladenosine(2503) in 23S rRNA + 5'-deoxyadenosine + L-methionine + 2 oxidized [2Fe-2S]-[ferredoxin] + S-adenosyl-L-homocysteine. The catalysed reaction is adenosine(37) in tRNA + 2 reduced [2Fe-2S]-[ferredoxin] + 2 S-adenosyl-L-methionine = 2-methyladenosine(37) in tRNA + 5'-deoxyadenosine + L-methionine + 2 oxidized [2Fe-2S]-[ferredoxin] + S-adenosyl-L-homocysteine. In terms of biological role, specifically methylates position 2 of adenine 2503 in 23S rRNA and position 2 of adenine 37 in tRNAs. This chain is Probable dual-specificity RNA methyltransferase RlmN, found in Parasynechococcus marenigrum (strain WH8102).